The sequence spans 622 residues: Probable potassium transport system protein Kup 1 (622 aa).

12 helical membrane passes run 11 to 31 (LTLGAIGVVYGDIGTSVLYAV), 50 to 70 (ILSIFFWTLTIIVSLKYVTLV), 101 to 121 (VLLLVGIFGTCLFYGDGVITP), 137 to 157 (PAFNKFVIPLTLLVLFGLFWV), 168 to 188 (FFGPITVVWFACIAVLGVAQI), 215 to 235 (FIILGAVVLCVTGAEALYADL), 247 to 267 (WFAVVMPALTLNYFGQGALLL), 285 to 305 (ALLPLVGLATLATVIASQALI), 337 to 357 (IYLPFVNWGLFVTIVLAVMIF), 366 to 386 (AYGIAVCTDMLITTILTFFVI), 393 to 413 (PLWLCVAATSFFFVVDFAFWA), and 419 to 439 (LFDGGWFPLLIGGAIFILMIT).

The protein belongs to the HAK/KUP transporter (TC 2.A.72) family.

It is found in the cell inner membrane. The catalysed reaction is K(+)(in) + H(+)(in) = K(+)(out) + H(+)(out). Transport of potassium into the cell. Likely operates as a K(+):H(+) symporter. The protein is Probable potassium transport system protein Kup 1 of Albidiferax ferrireducens (strain ATCC BAA-621 / DSM 15236 / T118) (Rhodoferax ferrireducens).